Reading from the N-terminus, the 360-residue chain is Protein Wnt-2 (360 aa).

An N-terminal signal peptide occupies residues 1-25 (MNAPLGGIWLWLPLLLTWLTPEVSS). 11 cysteine pairs are disulfide-bonded: cysteine 76–cysteine 87, cysteine 127–cysteine 135, cysteine 137–cysteine 157, cysteine 206–cysteine 220, cysteine 208–cysteine 215, cysteine 278–cysteine 309, cysteine 294–cysteine 304, cysteine 308–cysteine 348, cysteine 324–cysteine 339, cysteine 326–cysteine 336, and cysteine 331–cysteine 332. Residue serine 212 is the site of O-palmitoleoyl serine; by PORCN attachment. Asparagine 295 is a glycosylation site (N-linked (GlcNAc...) asparagine).

The protein belongs to the Wnt family. Post-translationally, palmitoleoylation is required for efficient binding to frizzled receptors. Depalmitoleoylation leads to Wnt signaling pathway inhibition.

Its subcellular location is the secreted. The protein localises to the extracellular space. The protein resides in the extracellular matrix. In terms of biological role, ligand for members of the frizzled family of seven transmembrane receptors. Functions in the canonical Wnt signaling pathway that results in activation of transcription factors of the TCF/LEF family. This is Protein Wnt-2 (WNT2) from Dasypus novemcinctus (Nine-banded armadillo).